We begin with the raw amino-acid sequence, 317 residues long: Melanocyte-stimulating hormone receptor (317 aa).

Over 1–37 the chain is Extracellular; that stretch reads MPVLGSQRRLLGSLNCTPPATFPLTLAPNRTGPQCLE. Asn29 carries N-linked (GlcNAc...) asparagine glycosylation. The helical transmembrane segment at 38-63 threads the bilayer; that stretch reads VSIPDGLFLSLGLVSLVENVLVVAAI. Residues 64 to 72 lie on the Cytoplasmic side of the membrane; sequence AKNRNLHSP. Residues 73–93 traverse the membrane as a helical segment; sequence MYYFICCLAVSDLLVSVSNVL. The Extracellular segment spans residues 94–118; that stretch reads ETAVMLLLEAGALAARAAVVQQLDN. A helical transmembrane segment spans residues 119-140; the sequence is VIDMLICGSMVSSLCFLGAIAV. Over 141–163 the chain is Cytoplasmic; sequence DRYISIFYALRYHSVVTLPRAWR. Residues 164–183 form a helical membrane-spanning segment; the sequence is IIAAIWVASILTSLLFITYY. Over 184-191 the chain is Extracellular; the sequence is NHTVVLLC. Residues 192–211 form a helical membrane-spanning segment; sequence LVGFFIAMLALMAVLYVHML. Topologically, residues 212–240 are cytoplasmic; it reads ARACQHARGIARLQKRQRPIHQGFGLKGA. Residues 241-266 form a helical membrane-spanning segment; sequence ATLTILLGVFFLCWGPFFLHLSLIVL. The Extracellular segment spans residues 267–279; it reads CPQHPTCGCIFKN. The helical transmembrane segment at 280 to 300 threads the bilayer; the sequence is FNLFLALIICNAIVDPLIYAF. At 301–317 the chain is on the cytoplasmic side; sequence RSQELRKTLQEVLQCSW. Cys315 is lipidated: S-palmitoyl cysteine.

It belongs to the G-protein coupled receptor 1 family. Interacts with MGRN1, but does not undergo MGRN1-mediated ubiquitination; this interaction competes with GNAS-binding and thus inhibits agonist-induced cAMP production. Interacts with OPN3; the interaction results in a decrease in MC1R-mediated cAMP signaling and ultimately a decrease in melanin production in melanocytes.

The protein localises to the cell membrane. Its function is as follows. Receptor for MSH (alpha, beta and gamma) and ACTH. The activity of this receptor is mediated by G proteins which activate adenylate cyclase. Mediates melanogenesis, the production of eumelanin (black/brown) and phaeomelanin (red/yellow), via regulation of cAMP signaling in melanocytes. This is Melanocyte-stimulating hormone receptor (MC1R) from Capreolus capreolus (European roe deer).